Reading from the N-terminus, the 310-residue chain is Membrane protein insertase YidC 2 (310 aa).

The N-terminal stretch at 1-23 (MKKTLKRILFSSLSLSILLLLTG) is a signal peptide. Residue cysteine 24 is the site of N-palmitoyl cysteine attachment. Cysteine 24 carries the S-diacylglycerol cysteine lipid modification. The next 5 membrane-spanning stretches (helical) occupy residues 33 to 53 (PYGV…TYFA), 58 to 78 (LGFG…ILPL), 135 to 155 (FGGI…AIFF), 180 to 200 (LTVI…QGVP), and 219 to 239 (VFMS…GGIF). The segment at 262–310 (EYTKNPPKAYKSNNARKDVTSSTKTTESNQAIITSKKTNRNAGKQKRRG) is disordered. The segment covering 281 to 297 (TSSTKTTESNQAIITSK) has biased composition (polar residues). The segment covering 298 to 310 (KTNRNAGKQKRRG) has biased composition (basic residues).

The protein belongs to the OXA1/ALB3/YidC family. Type 2 subfamily.

It localises to the cell membrane. Functionally, required for the insertion and/or proper folding and/or complex formation of integral membrane proteins into the membrane. Involved in integration of membrane proteins that insert both dependently and independently of the Sec translocase complex, as well as at least some lipoproteins. This Streptococcus agalactiae serotype III (strain NEM316) protein is Membrane protein insertase YidC 2.